A 343-amino-acid chain; its full sequence is Polyprenyl transferase spyF (343 aa).

8 consecutive transmembrane segments (helical) span residues 38–58 (WLAV…SHPL), 62–82 (VSVW…PASI), 92–112 (LLCL…NDWI), 138–158 (GFIW…STIL), 170–190 (LYIY…AIGW), 241–261 (AYVA…GLVL), 273–293 (SGWL…HQLL), and 311–331 (FALG…SSGM).

It belongs to the UbiA prenyltransferase family. Mg(2+) is required as a cofactor.

It localises to the membrane. It catalyses the reaction triacetate lactone + (2E,6E,10E)-geranylgeranyl diphosphate = (2E,6E,10E)-geranylgeranyl-triacetate lactone + diphosphate. It functions in the pathway secondary metabolite biosynthesis; terpenoid biosynthesis. Its function is as follows. Polyprenyl transferase; part of the gene cluster that mediates the biosynthesis of meroterpenoids called sartorypyrones. Within the pathway, spyF catalyzes the prenylation of triacetic acid lactone (TAL) to produce geranylgeranyl-triacetate lactone. The biosynthesis of sartorypyrones begins with the production of triacetic acid lactone (TAL) by the NR-PKS spyA using one molecule of acetyl-CoA and two molecules of malonyl-CoA. The prenyltransferase spyF then conjugates geranylgeranyl pyrophosphate (GGPP) to TAL to form geranylgeranyl-triacetate lactone, for which the pathway-specific geranylgeranyl pyrophosphate synthase (GGPS) spyE is required to provide GGPP. Subsequently, geranylgeranyl-triacetate lactone is epoxidized at the terminal olein by the FAD-dependent monooxygenase spyC, followed by cyclization of the terpenoid component catalyzed by the terpene cyclase spyD to produce both the bicyclic sartorypyrone F and the monocyclic sartorypyrone D. Finally, the last step of the biosynthesis involves the acetylation of the meroterpenoids sartorypyrones D and F by the acetyltransferase SpyB to produce sartorypyrones A and G, respectively. The polypeptide is Polyprenyl transferase spyF (Aspergillus fumigatus (strain ATCC MYA-4609 / CBS 101355 / FGSC A1100 / Af293) (Neosartorya fumigata)).